The following is a 38-amino-acid chain: Non-specific lipid-transfer protein P2 (38 aa).

Belongs to the plant LTP family.

The protein resides in the secreted. In terms of biological role, plant non-specific lipid-transfer proteins transfer phospholipids as well as galactolipids across membranes. May play a role in wax or cutin deposition in the cell walls of expanding epidermal cells and certain secretory tissues. The protein is Non-specific lipid-transfer protein P2 of Vitis sp. (Grape).